We begin with the raw amino-acid sequence, 315 residues long: Neuroguidin (315 aa).

A2 is modified (N-acetylalanine). Residues 7 to 41 (LESDVSSSITLLKNLQEQVMAVTAQIQALTTKVRA) are a coiled coil. Positions 41 to 174 (AGTYSTEKGL…KGSAKKYVPP (134 aa)) are necessary for interaction with EIF4E. Phosphoserine occurs at positions 121, 142, and 143. The disordered stretch occupies residues 123–190 (SENDPLRFKP…YDETEAEREQ (68 aa)). Over residues 144-155 (EDEEESEAEEGQ) the composition is skewed to acidic residues. Basic and acidic residues predominate over residues 180–190 (HYDETEAEREQ). Residues 181 to 203 (YDETEAEREQKRLEKAKRRALSS) adopt a coiled-coil conformation. Residues S204 and S214 each carry the phosphoserine modification. 2 stretches are compositionally biased toward basic and acidic residues: residues 212–225 (QYSD…DARH) and 232–241 (SQEDQHRVNY). Disordered regions lie at residues 212–243 (QYSD…NYEE) and 284–315 (GTAH…RRRW). The span at 295–315 (VKKRKKLPKKGRKKKGFRRRW) shows a compositional bias: basic residues.

Belongs to the SAS10 family. In terms of assembly, interacts with CPEB1 and EIF4E. In terms of tissue distribution, expressed in testis, ovary, spleen, kidney, hippocampus and cerebellum (at protein level). Expressed in testis, ovary, spleen, kidney, brain.

It localises to the nucleus. The protein resides in the nucleolus. Its subcellular location is the chromosome. The protein localises to the centromere. It is found in the cytoplasm. It localises to the cell projection. The protein resides in the axon. Its subcellular location is the dendrite. The protein localises to the filopodium. Functionally, part of the small subunit (SSU) processome, first precursor of the small eukaryotic ribosomal subunit. During the assembly of the SSU processome in the nucleolus, many ribosome biogenesis factors, an RNA chaperone and ribosomal proteins associate with the nascent pre-rRNA and work in concert to generate RNA folding, modifications, rearrangements and cleavage as well as targeted degradation of pre-ribosomal RNA by the RNA exosome. Its dissociation from the complex determines the transition from state pre-A1 to state pre-A1*. Inhibits mRNA translation in a cytoplasmic polyadenylation element (CPE)-dependent manner. The protein is Neuroguidin (Ngdn) of Mus musculus (Mouse).